The sequence spans 343 residues: Probable dual-specificity RNA methyltransferase RlmN (343 aa).

Glu-93 functions as the Proton acceptor in the catalytic mechanism. The 222-residue stretch at 99–320 folds into the Radical SAM core domain; sequence TDDRATLCVS…NAKGVVCTIR (222 aa). Residues Cys-106 and Cys-331 are joined by a disulfide bond. Residues Cys-113, Cys-117, and Cys-120 each coordinate [4Fe-4S] cluster. S-adenosyl-L-methionine is bound by residues 158–159, Ser-190, 212–214, and His-288; these read GE and SLH. Cys-331 (S-methylcysteine intermediate) is an active-site residue.

This sequence belongs to the radical SAM superfamily. RlmN family. The cofactor is [4Fe-4S] cluster.

Its subcellular location is the cytoplasm. It carries out the reaction adenosine(2503) in 23S rRNA + 2 reduced [2Fe-2S]-[ferredoxin] + 2 S-adenosyl-L-methionine = 2-methyladenosine(2503) in 23S rRNA + 5'-deoxyadenosine + L-methionine + 2 oxidized [2Fe-2S]-[ferredoxin] + S-adenosyl-L-homocysteine. The catalysed reaction is adenosine(37) in tRNA + 2 reduced [2Fe-2S]-[ferredoxin] + 2 S-adenosyl-L-methionine = 2-methyladenosine(37) in tRNA + 5'-deoxyadenosine + L-methionine + 2 oxidized [2Fe-2S]-[ferredoxin] + S-adenosyl-L-homocysteine. Its function is as follows. Specifically methylates position 2 of adenine 2503 in 23S rRNA and position 2 of adenine 37 in tRNAs. This is Probable dual-specificity RNA methyltransferase RlmN from Parabacteroides distasonis (strain ATCC 8503 / DSM 20701 / CIP 104284 / JCM 5825 / NCTC 11152).